The chain runs to 157 residues: uncharacterized protein (157 aa).

This is an uncharacterized protein from Caenorhabditis elegans.